The chain runs to 400 residues: Canavanine gamma-lyase (400 aa).

At K213 the chain carries N6-(pyridoxal phosphate)lysine.

It belongs to the trans-sulfuration enzymes family. It depends on pyridoxal 5'-phosphate as a cofactor.

It catalyses the reaction L-canavanine + H2O = N-hydroxyguanidine + L-homoserine. Lyase involved in the degradation of canavanine, the delta-oxa-analog of arginine, allowing growth on canavanine as sole nitrogen and carbon source. Catalyzes the elimination of hydroxyguanidine from canavanine with a subsequent water addition to yield homoserine. Is highly specific for canavanine and cannot use methionine, cystathionine or arginine. The chain is Canavanine gamma-lyase from Pseudomonas canavaninivorans.